A 527-amino-acid polypeptide reads, in one-letter code: Amidophosphoribosyltransferase (527 aa).

Positions 1–30 (MAVDSDYVTDRAAGSRQTVTGQQPEQDLNS) are disordered. A propeptide spanning residues 1–34 (MAVDSDYVTDRAAGSRQTVTGQQPEQDLNSPREE) is cleaved from the precursor. Polar residues predominate over residues 15–29 (SRQTVTGQQPEQDLN). Cysteine 35 (nucleophile) is an active-site residue. Residues 35–261 (CGVFGVWAPG…PGELLAIDAD (227 aa)) enclose the Glutamine amidotransferase type-2 domain. Residue cysteine 276 participates in [4Fe-4S] cluster binding. The Mg(2+) site is built by serine 323, aspartate 385, and aspartate 386. Positions 422, 478, and 481 each coordinate [4Fe-4S] cluster.

It in the C-terminal section; belongs to the purine/pyrimidine phosphoribosyltransferase family. Mg(2+) serves as cofactor. Requires [4Fe-4S] cluster as cofactor.

The catalysed reaction is 5-phospho-beta-D-ribosylamine + L-glutamate + diphosphate = 5-phospho-alpha-D-ribose 1-diphosphate + L-glutamine + H2O. It participates in purine metabolism; IMP biosynthesis via de novo pathway; N(1)-(5-phospho-D-ribosyl)glycinamide from 5-phospho-alpha-D-ribose 1-diphosphate: step 1/2. Catalyzes the formation of phosphoribosylamine from phosphoribosylpyrophosphate (PRPP) and glutamine. The polypeptide is Amidophosphoribosyltransferase (Mycobacterium bovis (strain ATCC BAA-935 / AF2122/97)).